Reading from the N-terminus, the 159-residue chain is Ribosomal RNA large subunit methyltransferase H (159 aa).

S-adenosyl-L-methionine is bound by residues L76, G108, and F127 to L132.

Belongs to the RNA methyltransferase RlmH family. Homodimer.

The protein resides in the cytoplasm. It catalyses the reaction pseudouridine(1915) in 23S rRNA + S-adenosyl-L-methionine = N(3)-methylpseudouridine(1915) in 23S rRNA + S-adenosyl-L-homocysteine + H(+). Functionally, specifically methylates the pseudouridine at position 1915 (m3Psi1915) in 23S rRNA. The sequence is that of Ribosomal RNA large subunit methyltransferase H from Lysinibacillus sphaericus (strain C3-41).